Consider the following 192-residue polypeptide: MKLLEEFIQEKGTVLPGNVLKVDAFLNHQIDPVLMQAMGNEFAKRFQDLGITKIVTIESSGIAPAVFAGLALSVPVVFARKKKSVTLTDNLFTSTVYSYTKKESNDISVSKQFLTADDTILVIDDFLANGQAALGLLEIAEHAGAKVAGIGIVIEKSFQQGRELLNKTGIPVYSLARIASLENEEILFLEEE.

Xanthine is bound by residues L20 and N27. 128–132 (ANGQA) lines the 5-phospho-alpha-D-ribose 1-diphosphate pocket. Xanthine is bound at residue K156.

Belongs to the purine/pyrimidine phosphoribosyltransferase family. Xpt subfamily. Homodimer.

The protein resides in the cytoplasm. The catalysed reaction is XMP + diphosphate = xanthine + 5-phospho-alpha-D-ribose 1-diphosphate. It participates in purine metabolism; XMP biosynthesis via salvage pathway; XMP from xanthine: step 1/1. In terms of biological role, converts the preformed base xanthine, a product of nucleic acid breakdown, to xanthosine 5'-monophosphate (XMP), so it can be reused for RNA or DNA synthesis. This is Xanthine phosphoribosyltransferase from Listeria monocytogenes serotype 4b (strain F2365).